A 363-amino-acid chain; its full sequence is Chorismate synthase (363 aa).

The segment at 44–63 (DLDRRKPGTSRHTTQRQEPD) is disordered. NADP(+) contacts are provided by Arg-48 and Arg-54. Residues 125 to 127 (RSS), 237 to 238 (NA), Gly-277, 292 to 296 (KATSS), and Arg-318 contribute to the FMN site.

It belongs to the chorismate synthase family. As to quaternary structure, homotetramer. The cofactor is FMNH2.

It catalyses the reaction 5-O-(1-carboxyvinyl)-3-phosphoshikimate = chorismate + phosphate. It functions in the pathway metabolic intermediate biosynthesis; chorismate biosynthesis; chorismate from D-erythrose 4-phosphate and phosphoenolpyruvate: step 7/7. Functionally, catalyzes the anti-1,4-elimination of the C-3 phosphate and the C-6 proR hydrogen from 5-enolpyruvylshikimate-3-phosphate (EPSP) to yield chorismate, which is the branch point compound that serves as the starting substrate for the three terminal pathways of aromatic amino acid biosynthesis. This reaction introduces a second double bond into the aromatic ring system. The sequence is that of Chorismate synthase from Pseudomonas fluorescens (strain SBW25).